Reading from the N-terminus, the 533-residue chain is Glucose-6-phosphate isomerase (533 aa).

Glu-341 (proton donor) is an active-site residue. Active-site residues include His-372 and Lys-501.

Belongs to the GPI family.

The protein resides in the cytoplasm. The enzyme catalyses alpha-D-glucose 6-phosphate = beta-D-fructose 6-phosphate. It functions in the pathway carbohydrate biosynthesis; gluconeogenesis. The protein operates within carbohydrate degradation; glycolysis; D-glyceraldehyde 3-phosphate and glycerone phosphate from D-glucose: step 2/4. Catalyzes the reversible isomerization of glucose-6-phosphate to fructose-6-phosphate. This Cereibacter sphaeroides (strain ATCC 17023 / DSM 158 / JCM 6121 / CCUG 31486 / LMG 2827 / NBRC 12203 / NCIMB 8253 / ATH 2.4.1.) (Rhodobacter sphaeroides) protein is Glucose-6-phosphate isomerase.